Here is a 409-residue protein sequence, read N- to C-terminus: Glutamyl-tRNA reductase (409 aa).

Residues 46–49, S88, 93–95, and Q99 each bind substrate; these read TCNR and ENE. The active-site Nucleophile is the C47. 164-169 is an NADP(+) binding site; the sequence is GNGMIA.

This sequence belongs to the glutamyl-tRNA reductase family. As to quaternary structure, homodimer.

The catalysed reaction is (S)-4-amino-5-oxopentanoate + tRNA(Glu) + NADP(+) = L-glutamyl-tRNA(Glu) + NADPH + H(+). It functions in the pathway porphyrin-containing compound metabolism; protoporphyrin-IX biosynthesis; 5-aminolevulinate from L-glutamyl-tRNA(Glu): step 1/2. Catalyzes the NADPH-dependent reduction of glutamyl-tRNA(Glu) to glutamate 1-semialdehyde (GSA). This Thermoplasma acidophilum (strain ATCC 25905 / DSM 1728 / JCM 9062 / NBRC 15155 / AMRC-C165) protein is Glutamyl-tRNA reductase.